We begin with the raw amino-acid sequence, 483 residues long: Glutamyl-tRNA(Gln) amidotransferase subunit A (483 aa).

Active-site charge relay system residues include Lys-75 and Ser-150. Ser-174 functions as the Acyl-ester intermediate in the catalytic mechanism.

Belongs to the amidase family. GatA subfamily. As to quaternary structure, heterotrimer of A, B and C subunits.

It carries out the reaction L-glutamyl-tRNA(Gln) + L-glutamine + ATP + H2O = L-glutaminyl-tRNA(Gln) + L-glutamate + ADP + phosphate + H(+). Functionally, allows the formation of correctly charged Gln-tRNA(Gln) through the transamidation of misacylated Glu-tRNA(Gln) in organisms which lack glutaminyl-tRNA synthetase. The reaction takes place in the presence of glutamine and ATP through an activated gamma-phospho-Glu-tRNA(Gln). This Deinococcus geothermalis (strain DSM 11300 / CIP 105573 / AG-3a) protein is Glutamyl-tRNA(Gln) amidotransferase subunit A.